The primary structure comprises 24 residues: Flavin reductase (NADPH) (24 aa).

Residues Gly-9, Thr-11, Gly-12, and Thr-14 each contribute to the NADP(+) site.

The protein belongs to the BLVRB family. Monomer. In terms of tissue distribution, detected in erythrocytes (at protein level).

It is found in the cytoplasm. It catalyses the reaction reduced riboflavin + NADP(+) = riboflavin + NADPH + 2 H(+). It carries out the reaction bilirubin IXbeta + NADP(+) = biliverdin IXbeta + NADPH + H(+). The catalysed reaction is FMNH2 + NAD(+) = FMN + NADH + 2 H(+). The enzyme catalyses FMNH2 + NADP(+) = FMN + NADPH + 2 H(+). It catalyses the reaction S-nitroso-CoA + L-cysteinyl-[protein] = S-nitroso-L-cysteinyl-[protein] + CoA. It carries out the reaction L-cysteinyl-[SCAN] + S-nitroso-CoA = S-nitroso-L-cysteinyl-[SCAN] + CoA. The catalysed reaction is S-nitroso-L-cysteinyl-[SCAN] + L-cysteinyl-[protein] = L-cysteinyl-[SCAN] + S-nitroso-L-cysteinyl-[protein]. In terms of biological role, enzyme that can both act as a NAD(P)H-dependent reductase and a S-nitroso-CoA-dependent nitrosyltransferase. Promotes fetal heme degradation during development. Also expressed in adult tissues, where it acts as a regulator of hematopoiesis, intermediary metabolism (glutaminolysis, glycolysis, TCA cycle and pentose phosphate pathway) and insulin signaling. Has a broad specificity oxidoreductase activity by catalyzing the NAD(P)H-dependent reduction of a variety of flavins, such as riboflavin, FAD or FMN, biliverdins, methemoglobin and PQQ (pyrroloquinoline quinone). Contributes to fetal heme catabolism by catalyzing reduction of biliverdin IXbeta into bilirubin IXbeta in the liver. Biliverdin IXbeta, which constitutes the major heme catabolite in the fetus is not present in adult. Does not reduce bilirubin IXalpha. Can also reduce the complexed Fe(3+) iron to Fe(2+) in the presence of FMN and NADPH. Acts as a protein nitrosyltransferase by catalyzing nitrosylation of cysteine residues of target proteins, such as HMOX2, INSR and IRS1. S-nitroso-CoA-dependent nitrosyltransferase activity is mediated via a 'ping-pong' mechanism: BLVRB first associates with both S-nitroso-CoA and protein substrate, nitric oxide group is then transferred from S-nitroso-CoA to Cys residues of BLVRB and from S-nitroso-BLVRB to the protein substrate. Inhibits insulin signaling by mediating nitrosylation of INSR and IRS1, leading to their inhibition. The protein is Flavin reductase (NADPH) (BLVRB) of Aquarana catesbeiana (American bullfrog).